The following is a 452-amino-acid chain: Lipase member H (452 aa).

A signal peptide spans 1–16; sequence MLRFYLFISLLCLVRS. N-linked (GlcNAc...) asparagine glycosylation is found at asparagine 50, asparagine 66, and asparagine 122. Catalysis depends on serine 154, which acts as the Nucleophile. Catalysis depends on aspartate 178, which acts as the Charge relay system. A disulfide bridge links cysteine 233 with cysteine 247. Histidine 249 functions as the Charge relay system in the catalytic mechanism. An N-linked (GlcNAc...) asparagine glycan is attached at asparagine 263. Intrachain disulfides connect cysteine 271–cysteine 282, cysteine 285–cysteine 293, and cysteine 428–cysteine 447.

This sequence belongs to the AB hydrolase superfamily. Lipase family. Interacts with TTMP/C3orf52. In terms of tissue distribution, expressed in liver and lacrimal gland.

It is found in the secreted. It localises to the cell membrane. It catalyses the reaction 1-hexadecanoyl-2-(9Z-octadecenoyl)-sn-glycero-3-phosphate + H2O = 2-(9Z-octadecenoyl)-sn-glycero-3-phosphate + hexadecanoate + H(+). Functionally, hydrolyzes specifically phosphatidic acid (PA) to produce 2-acyl lysophosphatidic acid (LPA; a potent bioactive lipid mediator) and fatty acid. Does not hydrolyze other phospholipids, like phosphatidylserine (PS), phosphatidylcholine (PC) and phosphatidylethanolamine (PE) or triacylglycerol (TG). The sequence is that of Lipase member H (LIPH) from Oryctolagus cuniculus (Rabbit).